The sequence spans 434 residues: Enolase (434 aa).

Substrate-binding residues include H158 and E167. E210 acts as the Proton donor in catalysis. Mg(2+) contacts are provided by D245, E294, and D319. Substrate-binding residues include E294 and D319. Residue K344 is the Proton acceptor of the active site. Substrate-binding positions include S371 to S374 and K395.

Belongs to the enolase family. As to quaternary structure, homodimer. The cofactor is Mg(2+).

Its subcellular location is the cytoplasm. It catalyses the reaction (2R)-2-phosphoglycerate = phosphoenolpyruvate + H2O. It participates in carbohydrate degradation; glycolysis; pyruvate from D-glyceraldehyde 3-phosphate: step 4/5. In Doryteuthis pealeii (Longfin inshore squid), this protein is Enolase.